The following is a 254-amino-acid chain: Pyridoxine 5'-phosphate synthase (254 aa).

N8 is a 3-amino-2-oxopropyl phosphate binding site. D10–H11 contacts 1-deoxy-D-xylulose 5-phosphate. Residue R19 coordinates 3-amino-2-oxopropyl phosphate. The Proton acceptor role is filled by H44. 1-deoxy-D-xylulose 5-phosphate-binding residues include R46 and H51. The Proton acceptor role is filled by E74. T104 is a 1-deoxy-D-xylulose 5-phosphate binding site. The active-site Proton donor is H198. Residues G199 and G220–H221 each bind 3-amino-2-oxopropyl phosphate.

It belongs to the PNP synthase family. As to quaternary structure, homooctamer; tetramer of dimers.

It is found in the cytoplasm. The catalysed reaction is 3-amino-2-oxopropyl phosphate + 1-deoxy-D-xylulose 5-phosphate = pyridoxine 5'-phosphate + phosphate + 2 H2O + H(+). The protein operates within cofactor biosynthesis; pyridoxine 5'-phosphate biosynthesis; pyridoxine 5'-phosphate from D-erythrose 4-phosphate: step 5/5. Functionally, catalyzes the complicated ring closure reaction between the two acyclic compounds 1-deoxy-D-xylulose-5-phosphate (DXP) and 3-amino-2-oxopropyl phosphate (1-amino-acetone-3-phosphate or AAP) to form pyridoxine 5'-phosphate (PNP) and inorganic phosphate. The protein is Pyridoxine 5'-phosphate synthase of Caulobacter vibrioides (strain ATCC 19089 / CIP 103742 / CB 15) (Caulobacter crescentus).